A 187-amino-acid polypeptide reads, in one-letter code: Orotate phosphoribosyltransferase (187 aa).

Residues Arg-98, Lys-99, Lys-102, His-104, and 128–136 each bind 5-phospho-alpha-D-ribose 1-diphosphate; that span reads EDVTTTGGS. Orotate is bound by residues Thr-132 and Arg-160.

The protein belongs to the purine/pyrimidine phosphoribosyltransferase family. PyrE subfamily. In terms of assembly, homodimer. The cofactor is Mg(2+).

The catalysed reaction is orotidine 5'-phosphate + diphosphate = orotate + 5-phospho-alpha-D-ribose 1-diphosphate. It participates in pyrimidine metabolism; UMP biosynthesis via de novo pathway; UMP from orotate: step 1/2. In terms of biological role, catalyzes the transfer of a ribosyl phosphate group from 5-phosphoribose 1-diphosphate to orotate, leading to the formation of orotidine monophosphate (OMP). This is Orotate phosphoribosyltransferase from Rhodopseudomonas palustris (strain TIE-1).